Consider the following 731-residue polypeptide: Probable G-protein coupled receptor 149 (731 aa).

The Extracellular portion of the chain corresponds to 1 to 35; it reads MSLFLSNLSTNDSSLWKENHNSTDLLNPPGTLNIY. N-linked (GlcNAc...) asparagine glycosylation is found at Asn-7, Asn-11, and Asn-21. Residues 36 to 56 traverse the membrane as a helical segment; sequence LFCLTCLMTFAALVGSIYSLI. The Cytoplasmic portion of the chain corresponds to 57–69; it reads SLLKMQNRTVVSM. A helical membrane pass occupies residues 70–90; the sequence is LVASWSVDDLMSVLSVTIFMF. Topologically, residues 91 to 109 are extracellular; it reads LQWPNEVPGYFQFLCTTSA. A disulfide bond links Cys-105 and Cys-182. The chain crosses the membrane as a helical span at residues 110 to 132; that stretch reads LMYLCQGLSSNLKATLLVSYNFY. The Cytoplasmic portion of the chain corresponds to 133–155; it reads TMHRGVGSQTASRRSGQVLGVVL. A helical transmembrane segment spans residues 156–176; it reads TVWAASLLLSALPLCGWGAFV. Over 177-189 the chain is Extracellular; that stretch reads RTPWGCLVDCSSS. A helical transmembrane segment spans residues 190-210; that stretch reads YVLFLSIVYALAFGLLVGLSV. Residues 211–310 lie on the Cytoplasmic side of the membrane; sequence PLTHRLLCSE…SFTVSVAQKR (100 aa). The segment at 234–271 is disordered; it reads RGASIPGTPPTAGRVVSLSPEDAPGPSLRRSGGCSPSS. The helical transmembrane segment at 311–331 threads the bilayer; sequence FALILALTKVVLWLPMMMHMV. The Extracellular portion of the chain corresponds to 332–342; that stretch reads VQNVVGFQSLP. The chain crosses the membrane as a helical span at residues 343–363; the sequence is LETFSFLLTLLATTVTPVFVL. Topologically, residues 364–731 are cytoplasmic; sequence SKRWTHLPCG…RKREEESKGS (368 aa). The disordered stretch occupies residues 475 to 526; the sequence is NTDITEAKQDSNNKKDAFSDKTGGDINYEETTFSEGPERRLSHEESQKPDLS. Basic and acidic residues-rich tracts occupy residues 479–497 and 510–526; these read TEAK…DKTG and GPER…PDLS.

It belongs to the G-protein coupled receptor 1 family.

It is found in the cell membrane. Orphan receptor. The sequence is that of Probable G-protein coupled receptor 149 (GPR149) from Homo sapiens (Human).